The primary structure comprises 494 residues: Alpha-amylase-related protein (494 aa).

A signal peptide spans 1–20; that stretch reads MIKFALALTLCLAGASLSLA. Position 21 is a pyrrolidone carboxylic acid (Q21). C48 and C104 form a disulfide bridge. Ca(2+) is bound by residues N118, Q169, and D178. C157 and C171 form a disulfide bridge. R206 contacts chloride. D208 acts as the Nucleophile in catalysis. Residue H212 participates in Ca(2+) binding. E245 serves as the catalytic Proton donor. Positions 308 and 343 each coordinate chloride. 3 disulfide bridges follow: C376–C382, C418–C441, and C448–C460.

Belongs to the glycosyl hydrolase 13 family. In terms of assembly, monomer. Requires Ca(2+) as cofactor. It depends on chloride as a cofactor.

It localises to the secreted. The enzyme catalyses Endohydrolysis of (1-&gt;4)-alpha-D-glucosidic linkages in polysaccharides containing three or more (1-&gt;4)-alpha-linked D-glucose units.. The chain is Alpha-amylase-related protein (Amyrel) from Drosophila bakoue (Fruit fly).